The following is a 439-amino-acid chain: FBD-associated F-box protein At5g56380 (439 aa).

The F-box domain occupies 1 to 61 (MDRISHLADE…LPETWGYQEP (61 aa)). Residues 358-406 (WNQPGSVPRCLSSSLETLEWVEYGGTHEEKELSTYLFKTAVCFKKASFT) form the FBD domain.

The protein is FBD-associated F-box protein At5g56380 of Arabidopsis thaliana (Mouse-ear cress).